The chain runs to 380 residues: Cytochrome b (380 aa).

The next 4 helical transmembrane spans lie at 34–54 (FGSL…LLAM), 78–99 (WLIR…YLHI), 114–134 (WNTG…GYVL), and 179–199 (FFAL…IHLT). 2 residues coordinate heme b: H84 and H98. 2 residues coordinate heme b: H183 and H197. Residue H202 coordinates a ubiquinone. 4 helical membrane-spanning segments follow: residues 227–247 (LKDI…ALFS), 289–309 (LGGV…PFLH), 321–341 (ISQL…WVGS), and 348–368 (FIII…VLFP).

It belongs to the cytochrome b family. The cytochrome bc1 complex contains 11 subunits: 3 respiratory subunits (MT-CYB, CYC1 and UQCRFS1), 2 core proteins (UQCRC1 and UQCRC2) and 6 low-molecular weight proteins (UQCRH/QCR6, UQCRB/QCR7, UQCRQ/QCR8, UQCR10/QCR9, UQCR11/QCR10 and a cleavage product of UQCRFS1). This cytochrome bc1 complex then forms a dimer. Requires heme b as cofactor.

It is found in the mitochondrion inner membrane. In terms of biological role, component of the ubiquinol-cytochrome c reductase complex (complex III or cytochrome b-c1 complex) that is part of the mitochondrial respiratory chain. The b-c1 complex mediates electron transfer from ubiquinol to cytochrome c. Contributes to the generation of a proton gradient across the mitochondrial membrane that is then used for ATP synthesis. The protein is Cytochrome b (MT-CYB) of Pelecanoides georgicus (South Georgia diving petrel).